The primary structure comprises 485 residues: Noelin (485 aa).

The first 16 residues, 1–16 (MSVPLLKIGVVLSTMA), serve as a signal peptide directing secretion. 8 N-linked (GlcNAc...) asparagine glycosylation sites follow: Asn33, Asn103, Asn187, Asn288, Asn307, Asn394, Asn431, and Asn473. Positions 87–227 (RDARTKQLRQ…LRACMQKLAC (141 aa)) form a coiled coil. Residues 226-478 (ACGKLTGISD…QTLYNVTLFH (253 aa)) enclose the Olfactomedin-like domain. Cys227 and Cys409 are disulfide-bonded. Residues 482 to 485 (SDEL) carry the Endoplasmic reticulum retention signal motif.

As to quaternary structure, homotetramer; disulfide-linked. Dimer of dimers, giving rise to a V-shaped homotretramer. Isoform 1 and isoform 3 interact with RTN4R. Identified in a complex with RTN4R and LINGO1. Peripherally associated with AMPAR complex. AMPAR complex consists of an inner core made of 4 pore-forming GluA/GRIA proteins (GRIA1, GRIA2, GRIA3 and GRIA4) and 4 major auxiliary subunits arranged in a twofold symmetry. One of the two pairs of distinct binding sites is occupied either by CNIH2, CNIH3 or CACNG2, CACNG3. The other harbors CACNG2, CACNG3, CACNG4, CACNG8 or GSG1L. This inner core of AMPAR complex is complemented by outer core constituents binding directly to the GluA/GRIA proteins at sites distinct from the interaction sites of the inner core constituents. Outer core constituents include at least PRRT1, PRRT2, CKAMP44/SHISA9, FRRS1L and NRN1. The proteins of the inner and outer core serve as a platform for other, more peripherally associated AMPAR constituents, including OLFM1. Alone or in combination, these auxiliary subunits control the gating and pharmacology of the AMPAR complex and profoundly impact their biogenesis and protein processing. Interacts with OLFM2. Interacts with DTNB. As to expression, expressed in the brain cortex, olfactory bulb and vomeronasal neuroepithelium (at protein level). Detected in brain cortex, hippocampus, dorsal root ganglion and olfactory bulb.

It is found in the secreted. Its subcellular location is the synapse. The protein resides in the endoplasmic reticulum. It localises to the cell projection. The protein localises to the axon. It is found in the perikaryon. Its function is as follows. Contributes to the regulation of axonal growth in the embryonic and adult central nervous system by inhibiting interactions between RTN4R and LINGO1. Inhibits RTN4R-mediated axon growth cone collapse. May play an important role in regulating the production of neural crest cells by the neural tube. May be required for normal responses to olfactory stimuli. The chain is Noelin (Olfm1) from Mus musculus (Mouse).